Here is a 185-residue protein sequence, read N- to C-terminus: Large ribosomal subunit protein uL5 (185 aa).

It belongs to the universal ribosomal protein uL5 family. Part of the 50S ribosomal subunit; part of the 5S rRNA/L5/L18/L25 subcomplex. Contacts the 5S rRNA and the P site tRNA. Forms a bridge to the 30S subunit in the 70S ribosome.

Its function is as follows. This is one of the proteins that bind and probably mediate the attachment of the 5S RNA into the large ribosomal subunit, where it forms part of the central protuberance. In the 70S ribosome it contacts protein S13 of the 30S subunit (bridge B1b), connecting the 2 subunits; this bridge is implicated in subunit movement. Contacts the P site tRNA; the 5S rRNA and some of its associated proteins might help stabilize positioning of ribosome-bound tRNAs. The polypeptide is Large ribosomal subunit protein uL5 (Bacteroides fragilis (strain ATCC 25285 / DSM 2151 / CCUG 4856 / JCM 11019 / LMG 10263 / NCTC 9343 / Onslow / VPI 2553 / EN-2)).